The primary structure comprises 137 residues: MERTFAIIKPDAVERNVTGKVLAMIEEGGFKIVGMKKIRLSKCQAEGFYYVHKERPFFGDLCAFMSRGPVIALVLEKENAIADWRGLMGATNPANAEAGTIRKALGVSIEENTVHGSDSPESASYEIPYFFNQLELV.

6 residues coordinate ATP: K9, F57, R85, T91, R102, and N112. Residue H115 is the Pros-phosphohistidine intermediate of the active site.

Belongs to the NDK family. In terms of assembly, homotetramer. It depends on Mg(2+) as a cofactor.

The protein localises to the cytoplasm. The enzyme catalyses a 2'-deoxyribonucleoside 5'-diphosphate + ATP = a 2'-deoxyribonucleoside 5'-triphosphate + ADP. It catalyses the reaction a ribonucleoside 5'-diphosphate + ATP = a ribonucleoside 5'-triphosphate + ADP. Functionally, major role in the synthesis of nucleoside triphosphates other than ATP. The ATP gamma phosphate is transferred to the NDP beta phosphate via a ping-pong mechanism, using a phosphorylated active-site intermediate. The sequence is that of Nucleoside diphosphate kinase from Citrifermentans bemidjiense (strain ATCC BAA-1014 / DSM 16622 / JCM 12645 / Bem) (Geobacter bemidjiensis).